The following is a 209-amino-acid chain: CAAX box protein 1 (209 aa).

Residues 182 to 209 (TAGRPPRDLSPSARPISSPPPETSCVLA) form a disordered region. Cys-206 is subject to Cysteine methyl ester. Cys-206 is lipidated: S-farnesyl cysteine. Residues 207-209 (VLA) constitute a propeptide, removed in mature form.

In terms of tissue distribution, ubiquitous.

Its subcellular location is the cell membrane. The chain is CAAX box protein 1 from Homo sapiens (Human).